Reading from the N-terminus, the 427-residue chain is Chaperone SurA (427 aa).

The signal sequence occupies residues Met1 to Ala19. PpiC domains lie at Thr170–Asp268 and Val277–Asp377.

The protein resides in the periplasm. The catalysed reaction is [protein]-peptidylproline (omega=180) = [protein]-peptidylproline (omega=0). Its function is as follows. Chaperone involved in the correct folding and assembly of outer membrane proteins. Recognizes specific patterns of aromatic residues and the orientation of their side chains, which are found more frequently in integral outer membrane proteins. May act in both early periplasmic and late outer membrane-associated steps of protein maturation. This chain is Chaperone SurA, found in Vibrio parahaemolyticus serotype O3:K6 (strain RIMD 2210633).